A 248-amino-acid chain; its full sequence is Triosephosphate isomerase (248 aa).

Residues N10 and K12 each coordinate substrate. Catalysis depends on H95, which acts as the Electrophile. Catalysis depends on E165, which acts as the Proton acceptor.

This sequence belongs to the triosephosphate isomerase family. Homodimer.

The enzyme catalyses D-glyceraldehyde 3-phosphate = dihydroxyacetone phosphate. It functions in the pathway carbohydrate biosynthesis; gluconeogenesis. It participates in carbohydrate degradation; glycolysis; D-glyceraldehyde 3-phosphate from glycerone phosphate: step 1/1. In Zygosaccharomyces bailii, this protein is Triosephosphate isomerase (TPI1).